A 659-amino-acid chain; its full sequence is 1,4-alpha-glucan branching enzyme GlgB (659 aa).

Positions 1-12 (MRNCKELKHEKN) are enriched in basic and acidic residues. The segment at 1-25 (MRNCKELKHEKNGNVTEKIGKNKGK) is disordered. Asp-337 functions as the Nucleophile in the catalytic mechanism. Glu-390 serves as the catalytic Proton donor.

It belongs to the glycosyl hydrolase 13 family. GlgB subfamily. In terms of assembly, monomer.

It carries out the reaction Transfers a segment of a (1-&gt;4)-alpha-D-glucan chain to a primary hydroxy group in a similar glucan chain.. It functions in the pathway glycan biosynthesis; glycogen biosynthesis. In terms of biological role, catalyzes the formation of the alpha-1,6-glucosidic linkages in glycogen by scission of a 1,4-alpha-linked oligosaccharide from growing alpha-1,4-glucan chains and the subsequent attachment of the oligosaccharide to the alpha-1,6 position. This chain is 1,4-alpha-glucan branching enzyme GlgB, found in Clostridium perfringens (strain ATCC 13124 / DSM 756 / JCM 1290 / NCIMB 6125 / NCTC 8237 / Type A).